We begin with the raw amino-acid sequence, 487 residues long: Glutamyl-tRNA(Gln) amidotransferase subunit A (487 aa).

Active-site charge relay system residues include Lys-74 and Ser-149. Ser-173 serves as the catalytic Acyl-ester intermediate.

The protein belongs to the amidase family. GatA subfamily. In terms of assembly, heterotrimer of A, B and C subunits.

The enzyme catalyses L-glutamyl-tRNA(Gln) + L-glutamine + ATP + H2O = L-glutaminyl-tRNA(Gln) + L-glutamate + ADP + phosphate + H(+). Functionally, allows the formation of correctly charged Gln-tRNA(Gln) through the transamidation of misacylated Glu-tRNA(Gln) in organisms which lack glutaminyl-tRNA synthetase. The reaction takes place in the presence of glutamine and ATP through an activated gamma-phospho-Glu-tRNA(Gln). The chain is Glutamyl-tRNA(Gln) amidotransferase subunit A from Synechococcus sp. (strain WH7803).